The chain runs to 125 residues: MSSKRFTKDHEWIEVDGDVGTVGISDYAQHALGDVVFVEVPEPGRVVAKGAEAAVVESVKAASEVYSPVSGTVTAGNQAIVDQPGLVNEAAEGAAWFFKLTLSNPGEVADLMDQAAYDAYLKTLE.

The Lipoyl-binding domain maps to 19–101; sequence VGTVGISDYA…EGAAWFFKLT (83 aa). N6-lipoyllysine is present on lysine 60.

Belongs to the GcvH family. The glycine cleavage system is composed of four proteins: P, T, L and H. The cofactor is (R)-lipoate.

In terms of biological role, the glycine cleavage system catalyzes the degradation of glycine. The H protein shuttles the methylamine group of glycine from the P protein to the T protein. The polypeptide is Glycine cleavage system H protein (Paramagnetospirillum magneticum (strain ATCC 700264 / AMB-1) (Magnetospirillum magneticum)).